A 287-amino-acid polypeptide reads, in one-letter code: ATP synthase gamma chain (287 aa).

Belongs to the ATPase gamma chain family. F-type ATPases have 2 components, CF(1) - the catalytic core - and CF(0) - the membrane proton channel. CF(1) has five subunits: alpha(3), beta(3), gamma(1), delta(1), epsilon(1). CF(0) has three main subunits: a, b and c.

The protein resides in the cell inner membrane. Its function is as follows. Produces ATP from ADP in the presence of a proton gradient across the membrane. The gamma chain is believed to be important in regulating ATPase activity and the flow of protons through the CF(0) complex. The polypeptide is ATP synthase gamma chain (Xylella fastidiosa (strain 9a5c)).